The sequence spans 350 residues: MKPLVLLVALLLWPSSVPAYPSITVTPDEEQNLNHYIQVLENLVRSVPSGEPGREKKSNSPKHVYSIASKGSKFKELVTHGDASTENDVLTNPISEETTTFPTGGFTPEIGKKKHTESTPFWSIKPNNVSIVLHAEEPYIENEEPEPEPEPAAKQTEAPRMLPVVTESSTSPYVTSYKSPVTTLDKSTGIGISTESEDVPQLSGETAIEKPEEFGKHPESWNNDDILKKILDINSQVQQALLSDTSNPAYREDIEASKDHLKRSLALAAAAEHKLKTMYKSQLLPVGRTSNKIDDIETVINMLCNSRSKLYEYLDIKCVPPEMREKAATVFNTLKNMCRSRRVTALLKVY.

A signal peptide spans 1–19; it reads MKPLVLLVALLLWPSSVPA. The N-linked (GlcNAc...) asparagine glycan is linked to N128.

The protein belongs to the SPESP1 family. In terms of processing, glycosylated. In testis there are two predominant forms of 77- and 67-kDa and a form of 47-kDa, whereas in epididymal sperm from caput, corpus, and cauda there are two forms of 47- and 43-kDa. Testis forms contain complex carbohydrate residues. Epididymal sperm forms are N-glycosylated. Then undergoes significant glycosylation in the testis and that the majority of these glycoconjugates are removed by the time sperm reach the caput epididymis. Highly expressed in testis, where it is localized in the acrosome of postmeiotic stages of spermiogenesis (round and elongating spermatids and in ejaculated spermatozoa) (at protein level). Poorly expressed in placenta and fetal lung.

The protein resides in the cytoplasmic vesicle. Its subcellular location is the secretory vesicle. It is found in the acrosome. Its function is as follows. Involved in fertilization ability of sperm. The polypeptide is Sperm equatorial segment protein 1 (Homo sapiens (Human)).